Consider the following 258-residue polypeptide: Phosphoadenosine 5'-phosphosulfate reductase (258 aa).

Cys244 (nucleophile; cysteine thiosulfonate intermediate) is an active-site residue.

The protein belongs to the PAPS reductase family. CysH subfamily.

The protein localises to the cytoplasm. It catalyses the reaction [thioredoxin]-disulfide + sulfite + adenosine 3',5'-bisphosphate + 2 H(+) = [thioredoxin]-dithiol + 3'-phosphoadenylyl sulfate. The protein operates within sulfur metabolism; hydrogen sulfide biosynthesis; sulfite from sulfate: step 3/3. Catalyzes the formation of sulfite from phosphoadenosine 5'-phosphosulfate (PAPS) using thioredoxin as an electron donor. In Vibrio atlanticus (strain LGP32) (Vibrio splendidus (strain Mel32)), this protein is Phosphoadenosine 5'-phosphosulfate reductase.